The sequence spans 59 residues: U-actitoxin-Aer2a (59 aa).

Post-translationally, contains 5 disulfide bonds.

The protein localises to the secreted. Its subcellular location is the nematocyst. This is U-actitoxin-Aer2a from Anemonia erythraea (Sea anemone).